Here is a 355-residue protein sequence, read N- to C-terminus: Aromatic amino acid aminotransferase (355 aa).

Lys217 carries the post-translational modification N6-(pyridoxal phosphate)lysine.

The protein belongs to the class-II pyridoxal-phosphate-dependent aminotransferase family. As to quaternary structure, homodimer. It depends on pyridoxal 5'-phosphate as a cofactor.

It carries out the reaction an aromatic L-alpha-amino acid + 2-oxoglutarate = an aromatic oxo-acid + L-glutamate. Its function is as follows. Aminotransferase that catalyzes the conversion of aromatic amino acids and 2-oxoglutarate into corresponding aromatic oxo acids and L-glutamate. In Mycolicibacterium paratuberculosis (strain ATCC BAA-968 / K-10) (Mycobacterium paratuberculosis), this protein is Aromatic amino acid aminotransferase.